We begin with the raw amino-acid sequence, 555 residues long: Glypican-6 (555 aa).

Residues 1 to 23 (MPSWIGAVILPLLGLLLSLPAGA) form the signal peptide. The span at 348-357 (PALRSARSAP) shows a compositional bias: low complexity. The disordered stretch occupies residues 348 to 376 (PALRSARSAPENFNTRFRPYNPEERPTTA). S529 carries the GPI-anchor amidated serine lipid modification. A propeptide spans 530–555 (SAAQRGHSLLSWSLTCIVLALQRLCR) (removed in mature form).

This sequence belongs to the glypican family.

It localises to the cell membrane. Its subcellular location is the secreted. The protein localises to the extracellular space. Cell surface proteoglycan that bears heparan sulfate. Putative cell surface coreceptor for growth factors, extracellular matrix proteins, proteases and anti-proteases. Enhances migration and invasion of cancer cells through WNT5A signaling. In Pongo abelii (Sumatran orangutan), this protein is Glypican-6 (GPC6).